A 232-amino-acid chain; its full sequence is Small ribosomal subunit protein uS3 (232 aa).

Residues 39–107 (VRQFLTKELS…PAQINIAEVR (69 aa)) form the KH type-2 domain.

This sequence belongs to the universal ribosomal protein uS3 family. As to quaternary structure, part of the 30S ribosomal subunit. Forms a tight complex with proteins S10 and S14.

In terms of biological role, binds the lower part of the 30S subunit head. Binds mRNA in the 70S ribosome, positioning it for translation. The sequence is that of Small ribosomal subunit protein uS3 from Sodalis glossinidius (strain morsitans).